The chain runs to 393 residues: Homoserine O-succinyltransferase (393 aa).

The AB hydrolase-1 domain maps to 62–372 (NAVLVCHALN…PHGHDAFLLD (311 aa)). Serine 168 serves as the catalytic Nucleophile. Arginine 238 provides a ligand contact to substrate. Catalysis depends on residues aspartate 333 and histidine 366. Residue aspartate 367 participates in substrate binding.

The protein belongs to the AB hydrolase superfamily. MetX family. Homodimer.

It localises to the cytoplasm. It carries out the reaction L-homoserine + succinyl-CoA = O-succinyl-L-homoserine + CoA. Its pathway is amino-acid biosynthesis; L-methionine biosynthesis via de novo pathway; O-succinyl-L-homoserine from L-homoserine: step 1/1. Functionally, transfers a succinyl group from succinyl-CoA to L-homoserine, forming succinyl-L-homoserine. In Cupriavidus taiwanensis (strain DSM 17343 / BCRC 17206 / CCUG 44338 / CIP 107171 / LMG 19424 / R1) (Ralstonia taiwanensis (strain LMG 19424)), this protein is Homoserine O-succinyltransferase.